The sequence spans 943 residues: Centromere protein C (943 aa).

Lys45 participates in a covalent cross-link: Glycyl lysine isopeptide (Lys-Gly) (interchain with G-Cter in SUMO2). The interval 70–91 is disordered; sequence CIQSPSKECQKSHPKSVPVSSK. Phosphoserine occurs at positions 73 and 96. Lys119 is covalently cross-linked (Glycyl lysine isopeptide (Lys-Gly) (interchain with G-Cter in SUMO2)). Position 130 is a phosphothreonine (Thr130). Residue Lys134 forms a Glycyl lysine isopeptide (Lys-Gly) (interchain with G-Cter in SUMO2) linkage. Ser146 carries the phosphoserine modification. A Glycyl lysine isopeptide (Lys-Gly) (interchain with G-Cter in SUMO2) cross-link involves residue Lys180. Thr183 bears the Phosphothreonine mark. Ser189 carries the phosphoserine modification. Residues Lys212 and Lys217 each participate in a glycyl lysine isopeptide (Lys-Gly) (interchain with G-Cter in SUMO2) cross-link. Basic and acidic residues predominate over residues 224–239; that stretch reads VSDEEDKTSEGQERKP. The tract at residues 224–250 is disordered; the sequence is VSDEEDKTSEGQERKPSGSSQNRIRDS. Ser225 carries the post-translational modification Phosphoserine. Glycyl lysine isopeptide (Lys-Gly) (interchain with G-Cter in SUMO2) cross-links involve residues Lys238 and Lys260. The short motif at 259 to 273 is the Nuclear localization signal element; it reads KKSFSTLFLETVKRK. Ser261 carries the phosphoserine modification. Glycyl lysine isopeptide (Lys-Gly) (interchain with G-Cter in SUMO2) cross-links involve residues Lys271, Lys273, and Lys297. Residues Ser316, Ser333, Ser376, and Ser397 each carry the phosphoserine modification. The interval 358 to 377 is disordered; that stretch reads LANDKHSHKPHPVETSQPSD. The interval 403–513 is disordered; it reads YSKNAEKPSR…SKNKLVPEEV (111 aa). Residues 412–426 show a composition bias toward basic residues; that stretch reads RSKRTIKQKQRRKFM. Basic and acidic residues-rich tracts occupy residues 438 to 463 and 488 to 510; these read QSKDENIHTSHITQDEFQRNSDRNME and TRKDKEESKKKRFSSESKNKLVP. Ser439 carries the phosphoserine modification. A Glycyl lysine isopeptide (Lys-Gly) (interchain with G-Cter in SUMO2) cross-link involves residue Lys440. Residues 484–499 carry the Nuclear localization signal motif; it reads KKSSTRKDKEESKKKR. Ser528 is subject to Phosphoserine. Lys534 is covalently cross-linked (Glycyl lysine isopeptide (Lys-Gly) (interchain with G-Cter in SUMO2)). Disordered regions lie at residues 537-587 and 632-717; these read ESPV…ATKG and DCSR…KQSK. Ser538 carries the post-translational modification Phosphoserine. Positions 558-574 match the Nuclear localization signal motif; that stretch reads RKSTKKTNQSSKNIRKK. A compositionally biased stretch (basic residues) spans 570 to 583; it reads NIRKKTIPLKRQKT. The span at 633–672 shows a compositional bias: polar residues; that stretch reads CSRSTRSSKNEDNIMTAQNVPLKPQTSGYTCNIPTESNLD. Lys677 participates in a covalent cross-link: Glycyl lysine isopeptide (Lys-Gly) (interchain with G-Cter in SUMO2). Residues Ser684, Ser709, and Ser710 each carry the phosphoserine modification. The segment covering 706–715 has biased composition (basic and acidic residues); the sequence is VHGSSDDSKQ. Lys727 participates in a covalent cross-link: Glycyl lysine isopeptide (Lys-Gly) (interchain with G-Cter in SUMO2). Residue Thr734 is modified to Phosphothreonine. Residues 737–759 are MIF2 homology domain II; it reads VRRTKRTRLKPLEYWRGERIDYQ. Residues Ser763 and Ser773 each carry the phosphoserine modification. The short motif at 780-798 is the Nuclear localization signal element; sequence KRKAKENIGKVNKKSNKKR. Residue Lys807 forms a Glycyl lysine isopeptide (Lys-Gly) (interchain with G-Cter in SUMO2) linkage. Positions 890–943 are MIF2 homology domain III; it reads LVFYVNFGDLLCTLHETPYILSTGDSFYVPSGNYYNIKNLRNEESVLLFTQIKR.

The protein belongs to the CENP-C/MIF2 family. In terms of assembly, oligomer. Component of the CENPA-NAC complex, at least composed of CENPA, CENPC, CENPH, CENPM, CENPN, CENPT and CENPU. The CENPA-NAC complex interacts with the CENPA-CAD complex, composed of CENPI, CENPK, CENPL, CENPO, CENPP, CENPQ, CENPR and CENPS. Binds to DAXX. Interacts with DNMT3B. Interacts directly with CENPA. Identified in a centromere complex containing histones H2A, H2B and H4, and at least CENPA, CENPB, CENPC, CENPT, CENPN, HJURP, SUPT16H, SSRP1 and RSF1. Interacts with MEIKIN.

The protein resides in the nucleus. The protein localises to the chromosome. Its subcellular location is the centromere. It is found in the kinetochore. Component of the CENPA-NAC (nucleosome-associated) complex, a complex that plays a central role in assembly of kinetochore proteins, mitotic progression and chromosome segregation. The CENPA-NAC complex recruits the CENPA-CAD (nucleosome distal) complex and may be involved in incorporation of newly synthesized CENPA into centromeres. CENPC recruits DNA methylation and DNMT3B to both centromeric and pericentromeric satellite repeats and regulates the histone code in these regions. The protein is Centromere protein C (CENPC) of Homo sapiens (Human).